The sequence spans 212 residues: Putative 3-methyladenine DNA glycosylase (212 aa).

This sequence belongs to the DNA glycosylase MPG family.

This is Putative 3-methyladenine DNA glycosylase from Frankia casuarinae (strain DSM 45818 / CECT 9043 / HFP020203 / CcI3).